The chain runs to 199 residues: Gene 66 protein (199 aa).

The protein is Gene 66 protein (66) of Mycobacterium (Mycobacteriophage D29).